A 284-amino-acid polypeptide reads, in one-letter code: Bifunctional protein FolD (284 aa).

Residues 166–168 and Ser-191 contribute to the NADP(+) site; that span reads GRS.

The protein belongs to the tetrahydrofolate dehydrogenase/cyclohydrolase family. In terms of assembly, homodimer.

The catalysed reaction is (6R)-5,10-methylene-5,6,7,8-tetrahydrofolate + NADP(+) = (6R)-5,10-methenyltetrahydrofolate + NADPH. It carries out the reaction (6R)-5,10-methenyltetrahydrofolate + H2O = (6R)-10-formyltetrahydrofolate + H(+). It participates in one-carbon metabolism; tetrahydrofolate interconversion. Catalyzes the oxidation of 5,10-methylenetetrahydrofolate to 5,10-methenyltetrahydrofolate and then the hydrolysis of 5,10-methenyltetrahydrofolate to 10-formyltetrahydrofolate. This is Bifunctional protein FolD from Leptospira interrogans serogroup Icterohaemorrhagiae serovar copenhageni (strain Fiocruz L1-130).